A 110-amino-acid chain; its full sequence is Large ribosomal subunit protein uL22 (110 aa).

Belongs to the universal ribosomal protein uL22 family. Part of the 50S ribosomal subunit.

Functionally, this protein binds specifically to 23S rRNA; its binding is stimulated by other ribosomal proteins, e.g. L4, L17, and L20. It is important during the early stages of 50S assembly. It makes multiple contacts with different domains of the 23S rRNA in the assembled 50S subunit and ribosome. Its function is as follows. The globular domain of the protein is located near the polypeptide exit tunnel on the outside of the subunit, while an extended beta-hairpin is found that lines the wall of the exit tunnel in the center of the 70S ribosome. The chain is Large ribosomal subunit protein uL22 from Vibrio parahaemolyticus serotype O3:K6 (strain RIMD 2210633).